The sequence spans 968 residues: Protein translocase subunit SecA (968 aa).

ATP is bound by residues Gln86, 104–108, and Asp494; that span reads GEGKT. The tract at residues 835 to 968 is disordered; the sequence is PAESAEESTD…RAAKAAKKRR (134 aa). 2 stretches are compositionally biased toward low complexity: residues 883–892 and 910–923; these read ARVATRPAAE and SAPSSDGGSSFSEG. Residues 956–968 show a composition bias toward basic residues; the sequence is ARRRAAKAAKKRR.

Belongs to the SecA family. Monomer and homodimer. Part of the essential Sec protein translocation apparatus which comprises SecA, SecYEG and auxiliary proteins SecDF. Other proteins may also be involved.

It localises to the cell membrane. The protein resides in the cytoplasm. The catalysed reaction is ATP + H2O + cellular proteinSide 1 = ADP + phosphate + cellular proteinSide 2.. Part of the Sec protein translocase complex. Interacts with the SecYEG preprotein conducting channel. Has a central role in coupling the hydrolysis of ATP to the transfer of proteins into and across the cell membrane, serving as an ATP-driven molecular motor driving the stepwise translocation of polypeptide chains across the membrane. In Beutenbergia cavernae (strain ATCC BAA-8 / DSM 12333 / CCUG 43141 / JCM 11478 / NBRC 16432 / NCIMB 13614 / HKI 0122), this protein is Protein translocase subunit SecA.